Consider the following 242-residue polypeptide: Biosynthetic peptidoglycan transglycosylase (242 aa).

The helical transmembrane segment at 19–39 (ILAALAVFWGGGIALFSVVPV) threads the bilayer.

This sequence belongs to the glycosyltransferase 51 family.

The protein resides in the cell inner membrane. It carries out the reaction [GlcNAc-(1-&gt;4)-Mur2Ac(oyl-L-Ala-gamma-D-Glu-L-Lys-D-Ala-D-Ala)](n)-di-trans,octa-cis-undecaprenyl diphosphate + beta-D-GlcNAc-(1-&gt;4)-Mur2Ac(oyl-L-Ala-gamma-D-Glu-L-Lys-D-Ala-D-Ala)-di-trans,octa-cis-undecaprenyl diphosphate = [GlcNAc-(1-&gt;4)-Mur2Ac(oyl-L-Ala-gamma-D-Glu-L-Lys-D-Ala-D-Ala)](n+1)-di-trans,octa-cis-undecaprenyl diphosphate + di-trans,octa-cis-undecaprenyl diphosphate + H(+). It participates in cell wall biogenesis; peptidoglycan biosynthesis. In terms of biological role, peptidoglycan polymerase that catalyzes glycan chain elongation from lipid-linked precursors. The sequence is that of Biosynthetic peptidoglycan transglycosylase from Salmonella typhi.